A 674-amino-acid polypeptide reads, in one-letter code: Methionine--tRNA ligase (674 aa).

The 'HIGH' region motif lies at proline 12–histidine 22. Zn(2+) contacts are provided by cysteine 143, cysteine 146, cysteine 156, and cysteine 159. Residues lysine 328–serine 332 carry the 'KMSKS' region motif. Residue lysine 331 participates in ATP binding. The tRNA-binding domain occupies serine 573–lysine 674.

This sequence belongs to the class-I aminoacyl-tRNA synthetase family. MetG type 1 subfamily. In terms of assembly, homodimer. It depends on Zn(2+) as a cofactor.

The protein localises to the cytoplasm. It catalyses the reaction tRNA(Met) + L-methionine + ATP = L-methionyl-tRNA(Met) + AMP + diphosphate. Its function is as follows. Is required not only for elongation of protein synthesis but also for the initiation of all mRNA translation through initiator tRNA(fMet) aminoacylation. The sequence is that of Methionine--tRNA ligase from Nitrosococcus oceani (strain ATCC 19707 / BCRC 17464 / JCM 30415 / NCIMB 11848 / C-107).